A 394-amino-acid chain; its full sequence is Putative transporter AraJ (394 aa).

The Cytoplasmic portion of the chain corresponds to 1 to 4 (MKKV). Residues 5–27 (ILSLALGTFGLGMAEFGIMGVLT) form a helical membrane-spanning segment. The Periplasmic segment spans residues 28–41 (ELAHNVGISIPAAG). A helical transmembrane segment spans residues 42 to 63 (HMISYYALGVVVGAPIIALFSS). At 64 to 69 (RYSLKH) the chain is on the cytoplasmic side. The helical transmembrane segment at 70–89 (ILLFLVALCVIGNAMFTLSS) threads the bilayer. The Periplasmic portion of the chain corresponds to 90-93 (SYLM). The chain crosses the membrane as a helical span at residues 94–116 (LAIGRLVSGFPHGAFFGVGAIVL). The Cytoplasmic segment spans residues 117–128 (SKIIKPGKVTAA). Residues 129-151 (VAGMVSGMTVANLLGIPLGTYLS) form a helical membrane-spanning segment. The Periplasmic segment spans residues 152 to 155 (QEFS). Residues 156–178 (WRYTFLLIAVFNIAVMASVYFWV) traverse the membrane as a helical segment. The Cytoplasmic segment spans residues 179 to 198 (PDIRDEAKGNLREQFHFLRS). The helical transmembrane segment at 199-221 (PAPWLIFAATMFGNAGVFAWFSY) threads the bilayer. The Periplasmic portion of the chain corresponds to 222–235 (VKPYMMFISGFSET). The chain crosses the membrane as a helical span at residues 236-255 (AMTFIMMLVGLGMVLGNMLS). Topologically, residues 256-261 (GRISGR) are cytoplasmic. The chain crosses the membrane as a helical span at residues 262-284 (YSPLRIAAVTDFIIVLALLMLFF). Residues 285-293 (CGGMKTTSL) are Periplasmic-facing. The chain crosses the membrane as a helical span at residues 294 to 316 (IFAFICCAGLFALSAPLQILLLQ). The Cytoplasmic segment spans residues 317-322 (NAKGGE). The chain crosses the membrane as a helical span at residues 323–342 (LLGAAGGQIAFNLGSAVGAY). The Periplasmic portion of the chain corresponds to 343–351 (CGGMMLTLG). Residues 352–374 (LAYNYVALPAALLSFAAMSSLLL) traverse the membrane as a helical segment. Topologically, residues 375–394 (YGRYKRQQAADTPVLAKPLG) are cytoplasmic.

It belongs to the major facilitator superfamily.

It localises to the cell inner membrane. Functionally, may be involved in either the transport or processing of arabinose polymers. This Escherichia coli (strain K12) protein is Putative transporter AraJ (araJ).